A 458-amino-acid chain; its full sequence is Adenylosuccinate synthetase (458 aa).

Residues 17 to 23 and 45 to 47 each bind GTP; these read GDEGKGK and GHT. The active-site Proton acceptor is the Asp-18. Mg(2+)-binding residues include Asp-18 and Gly-45. IMP contacts are provided by residues 18–21, 43–46, Thr-137, Arg-151, Gln-247, Thr-262, and Arg-330; these read DEGK and NAGH. The active-site Proton donor is His-46. 326 to 332 serves as a coordination point for substrate; the sequence is VTTGRSR. GTP is bound by residues Arg-332, 358–360, and 440–442; these read KLD and STS.

The protein belongs to the adenylosuccinate synthetase family. In terms of assembly, homodimer. The cofactor is Mg(2+).

The protein resides in the cytoplasm. It carries out the reaction IMP + L-aspartate + GTP = N(6)-(1,2-dicarboxyethyl)-AMP + GDP + phosphate + 2 H(+). The protein operates within purine metabolism; AMP biosynthesis via de novo pathway; AMP from IMP: step 1/2. Functionally, plays an important role in the de novo pathway of purine nucleotide biosynthesis. Catalyzes the first committed step in the biosynthesis of AMP from IMP. The polypeptide is Adenylosuccinate synthetase (Delftia acidovorans (strain DSM 14801 / SPH-1)).